A 110-amino-acid polypeptide reads, in one-letter code: Methionine-R-sulfoxide reductase B1-A (110 aa).

The MsrB domain occupies 1–104; the sequence is MSFCSFSGGE…FSSSLKFIPK (104 aa). Positions 23, 26, 69, and 72 each coordinate Zn(2+). Selenocysteine 93 functions as the Nucleophile in the catalytic mechanism. A non-standard amino acid (selenocysteine) is located at residue selenocysteine 93.

The protein belongs to the MsrB Met sulfoxide reductase family. The cofactor is Zn(2+). In the embryo, expressed in the polster, paraxial mesoderm, tectum, otic vesicle and liver.

The protein localises to the cytoplasm. Its subcellular location is the nucleus. The protein resides in the cytoskeleton. The enzyme catalyses L-methionyl-[protein] + [thioredoxin]-disulfide + H2O = L-methionyl-(R)-S-oxide-[protein] + [thioredoxin]-dithiol. It catalyses the reaction [thioredoxin]-disulfide + L-methionine + H2O = L-methionine (R)-S-oxide + [thioredoxin]-dithiol. In terms of biological role, methionine-sulfoxide reductase that specifically reduces methionine (R)-sulfoxide back to methionine. While in many cases, methionine oxidation is the result of random oxidation following oxidative stress, methionine oxidation is also a post-translational modification that takes place on specific residue. Acts as a regulator of actin assembly by reducing methionine (R)-sulfoxide mediated by MICALs (mical1, mical2 or mical3) on actin, thereby promoting filament repolymerization. Plays a role in innate immunity by reducing oxidized actin, leading to actin repolymerization in macrophages. This is Methionine-R-sulfoxide reductase B1-A (msrb1) from Danio rerio (Zebrafish).